Here is a 340-residue protein sequence, read N- to C-terminus: Protein jhp_1168 (340 aa).

Seems to interact with H.pylori HolB.

Functionally, could be the functional equivalent of DNA polymerase III delta subunit (HolA). In Helicobacter pylori (strain J99 / ATCC 700824) (Campylobacter pylori J99), this protein is Protein jhp_1168.